The primary structure comprises 329 residues: Glycerol-3-phosphate dehydrogenase [NAD(P)+] (329 aa).

The NADPH site is built by tryptophan 11, arginine 30, and lysine 103. Positions 103, 132, and 134 each coordinate sn-glycerol 3-phosphate. Residue alanine 136 coordinates NADPH. 5 residues coordinate sn-glycerol 3-phosphate: lysine 187, aspartate 240, serine 250, arginine 251, and asparagine 252. Residue lysine 187 is the Proton acceptor of the active site. Residue arginine 251 coordinates NADPH. The NADPH site is built by valine 275 and glutamate 277.

The protein belongs to the NAD-dependent glycerol-3-phosphate dehydrogenase family.

It is found in the cytoplasm. It carries out the reaction sn-glycerol 3-phosphate + NAD(+) = dihydroxyacetone phosphate + NADH + H(+). The catalysed reaction is sn-glycerol 3-phosphate + NADP(+) = dihydroxyacetone phosphate + NADPH + H(+). It functions in the pathway membrane lipid metabolism; glycerophospholipid metabolism. In terms of biological role, catalyzes the reduction of the glycolytic intermediate dihydroxyacetone phosphate (DHAP) to sn-glycerol 3-phosphate (G3P), the key precursor for phospholipid synthesis. The sequence is that of Glycerol-3-phosphate dehydrogenase [NAD(P)+] from Methylobacillus flagellatus (strain ATCC 51484 / DSM 6875 / VKM B-1610 / KT).